The chain runs to 361 residues: Dynein axonemal assembly factor 8 (361 aa).

Disordered regions lie at residues 65 to 191 and 309 to 334; these read DPAG…ERRK and AQPG…RRPL. The span at 136–157 shows a compositional bias: polar residues; it reads TLNTSASQSPRQGPQGEATRSP. A phosphoserine mark is found at serine 142 and serine 144. Low complexity predominate over residues 321-334; that stretch reads GSSSSSGHLGRRPL.

It localises to the dynein axonemal particle. The protein localises to the cytoplasm. Functionally, in cyliated cells, dynein axonemal particle-specific protein required for deployment of ODA to the axoneme. Interacts with outer dynein arm (ODA) subunits. The polypeptide is Dynein axonemal assembly factor 8 (DNAAF8) (Bos taurus (Bovine)).